We begin with the raw amino-acid sequence, 153 residues long: 6,7-dimethyl-8-ribityllumazine synthase (153 aa).

5-amino-6-(D-ribitylamino)uracil-binding positions include F22, 56–58 (AFE), and 80–82 (TVI). (2S)-2-hydroxy-3-oxobutyl phosphate is bound at residue 85–86 (ST). Residue H88 is the Proton donor of the active site. F113 contributes to the 5-amino-6-(D-ribitylamino)uracil binding site. R127 contacts (2S)-2-hydroxy-3-oxobutyl phosphate.

The protein belongs to the DMRL synthase family. As to quaternary structure, forms an icosahedral capsid composed of 60 subunits, arranged as a dodecamer of pentamers.

It catalyses the reaction (2S)-2-hydroxy-3-oxobutyl phosphate + 5-amino-6-(D-ribitylamino)uracil = 6,7-dimethyl-8-(1-D-ribityl)lumazine + phosphate + 2 H2O + H(+). The protein operates within cofactor biosynthesis; riboflavin biosynthesis; riboflavin from 2-hydroxy-3-oxobutyl phosphate and 5-amino-6-(D-ribitylamino)uracil: step 1/2. Functionally, catalyzes the formation of 6,7-dimethyl-8-ribityllumazine by condensation of 5-amino-6-(D-ribitylamino)uracil with 3,4-dihydroxy-2-butanone 4-phosphate. This is the penultimate step in the biosynthesis of riboflavin. The chain is 6,7-dimethyl-8-ribityllumazine synthase from Glaesserella parasuis serovar 5 (strain SH0165) (Haemophilus parasuis).